Here is a 436-residue protein sequence, read N- to C-terminus: Citrate synthase (436 aa).

Catalysis depends on residues histidine 313 and aspartate 371.

This sequence belongs to the citrate synthase family. Homohexamer.

The enzyme catalyses oxaloacetate + acetyl-CoA + H2O = citrate + CoA + H(+). Its pathway is carbohydrate metabolism; tricarboxylic acid cycle; isocitrate from oxaloacetate: step 1/2. This is Citrate synthase (aarA) from Acetobacter aceti.